Here is a 462-residue protein sequence, read N- to C-terminus: RuvB-like 2 (462 aa).

An ATP-binding site is contributed by 76-83 (GQPGTGKT).

It belongs to the RuvB family. In terms of assembly, forms homohexameric rings. Can form a dodecamer with ruvbl2 made of two stacked hexameric rings. Is a component of the RNA polymerase II holoenzyme complex. Component of the chromatin-remodeling Ino80 complex. Component of some MLL1/MLL complex.

It is found in the nucleus. Its subcellular location is the dynein axonemal particle. The enzyme catalyses ATP + H2O = ADP + phosphate + H(+). In terms of biological role, has single-stranded DNA-stimulated ATPase and ATP-dependent DNA helicase (5' to 3') activity suggesting a role in nuclear processes such as recombination and transcription. Proposed core component of the chromatin remodeling INO80 complex which exhibits DNA- and nucleosome-activated ATPase activity and catalyzes ATP-dependent nucleosome sliding. Involved in the endoplasmic reticulum (ER)-associated degradation (ERAD) pathway where it negatively regulates expression of ER stress response genes. The sequence is that of RuvB-like 2 (ruvbl2) from Xenopus laevis (African clawed frog).